A 478-amino-acid polypeptide reads, in one-letter code: Glutamyl-tRNA(Gln) amidotransferase subunit A (478 aa).

Catalysis depends on charge relay system residues lysine 72 and serine 147. The active-site Acyl-ester intermediate is serine 171.

It belongs to the amidase family. GatA subfamily. In terms of assembly, heterotrimer of A, B and C subunits.

It catalyses the reaction L-glutamyl-tRNA(Gln) + L-glutamine + ATP + H2O = L-glutaminyl-tRNA(Gln) + L-glutamate + ADP + phosphate + H(+). In terms of biological role, allows the formation of correctly charged Gln-tRNA(Gln) through the transamidation of misacylated Glu-tRNA(Gln) in organisms which lack glutaminyl-tRNA synthetase. The reaction takes place in the presence of glutamine and ATP through an activated gamma-phospho-Glu-tRNA(Gln). This chain is Glutamyl-tRNA(Gln) amidotransferase subunit A, found in Saccharolobus solfataricus (strain ATCC 35092 / DSM 1617 / JCM 11322 / P2) (Sulfolobus solfataricus).